A 557-amino-acid chain; its full sequence is Selenoprotein N (557 aa).

The disordered stretch occupies residues 1 to 24 (MGQARPAARRPHSPDPGAQPAPPR). The first 42 residues, 1–42 (MGQARPAARRPHSPDPGAQPAPPRRRARALALLGALLAAAAA), serve as a signal peptide directing secretion. In terms of domain architecture, EF-hand spans 67–102 (VLGTDGLFLFSSLDTDQDMYISPEEFKPIAEKLTGS). Residue Asn-156 is glycosylated (N-linked (GlcNAc...) asparagine). Sec-428 is a non-standard amino acid (selenocysteine). Residues Asn-449 and Asn-497 are each glycosylated (N-linked (GlcNAc...) asparagine).

Interacts with RYR1, RYR2 and RYR3. N-glycosylated.

The protein localises to the endoplasmic reticulum membrane. Functionally, plays an important role in cell protection against oxidative stress and in the regulation of redox-related calcium homeostasis. Regulates the calcium level of the ER by protecting the calcium pump ATP2A2 against the oxidoreductase ERO1A-mediated oxidative damage. Within the ER, ERO1A activity increases the concentration of H(2)O(2), which attacks the luminal thiols in ATP2A2 and thus leads to cysteinyl sulfenic acid formation (-SOH) and SEPN1 reduces the SOH back to free thiol (-SH), thus restoring ATP2A2 activity. Acts as a modulator of ryanodine receptor (RyR) activity: protects RyR from oxidation due to increased oxidative stress, or directly controls the RyR redox state, regulating the RyR-mediated calcium mobilization required for normal muscle development and differentiation. Essential for muscle regeneration and satellite cell maintenance in skeletal muscle. The polypeptide is Selenoprotein N (Mus musculus (Mouse)).